The following is a 317-amino-acid chain: Periplasmic [NiFe] hydrogenase small subunit 1 (317 aa).

Residues 1–49 (MRFSVGLGKEGAEERLARRGVSRRDFLKFCTAIAVTMGMGPAFAPEVAR) constitute a signal peptide (tat-type signal). C67, C70, C164, C200, H238, C241, C266, and C272 together coordinate [4Fe-4S] cluster. [3Fe-4S] cluster-binding residues include C281, C299, and C302.

Belongs to the [NiFe]/[NiFeSe] hydrogenase small subunit family. As to quaternary structure, heterodimer of a large and a small subunit. The cofactor is [3Fe-4S] cluster. [4Fe-4S] cluster serves as cofactor. Post-translationally, predicted to be exported by the Tat system. The position of the signal peptide cleavage has not been experimentally proven.

It is found in the periplasm. The catalysed reaction is 2 Fe(III)-[cytochrome c3] + H2 = 2 Fe(II)-[cytochrome c3] + 2 H(+). In Nitratidesulfovibrio vulgaris (strain ATCC 29579 / DSM 644 / CCUG 34227 / NCIMB 8303 / VKM B-1760 / Hildenborough) (Desulfovibrio vulgaris), this protein is Periplasmic [NiFe] hydrogenase small subunit 1 (hynB1).